The primary structure comprises 397 residues: CCA-adding enzyme (397 aa).

ATP contacts are provided by Gly-26 and Arg-29. The CTP site is built by Gly-26 and Arg-29. Mg(2+)-binding residues include Asp-39 and Asp-41. ATP is bound by residues Arg-110, Asp-153, Arg-156, Arg-159, and Arg-162. Residues Arg-110, Asp-153, Arg-156, Arg-159, and Arg-162 each contribute to the CTP site.

Belongs to the tRNA nucleotidyltransferase/poly(A) polymerase family. Bacterial CCA-adding enzyme type 3 subfamily. Homodimer. Mg(2+) serves as cofactor.

The catalysed reaction is a tRNA precursor + 2 CTP + ATP = a tRNA with a 3' CCA end + 3 diphosphate. It catalyses the reaction a tRNA with a 3' CCA end + 2 CTP + ATP = a tRNA with a 3' CCACCA end + 3 diphosphate. Its function is as follows. Catalyzes the addition and repair of the essential 3'-terminal CCA sequence in tRNAs without using a nucleic acid template. Adds these three nucleotides in the order of C, C, and A to the tRNA nucleotide-73, using CTP and ATP as substrates and producing inorganic pyrophosphate. tRNA 3'-terminal CCA addition is required both for tRNA processing and repair. Also involved in tRNA surveillance by mediating tandem CCA addition to generate a CCACCA at the 3' terminus of unstable tRNAs. While stable tRNAs receive only 3'-terminal CCA, unstable tRNAs are marked with CCACCA and rapidly degraded. The chain is CCA-adding enzyme from Bacillus mycoides (strain KBAB4) (Bacillus weihenstephanensis).